The primary structure comprises 132 residues: Small ribosomal subunit protein uS8c (132 aa).

The protein belongs to the universal ribosomal protein uS8 family. Part of the 30S ribosomal subunit.

Its subcellular location is the plastid. It localises to the chloroplast. Its function is as follows. One of the primary rRNA binding proteins, it binds directly to 16S rRNA central domain where it helps coordinate assembly of the platform of the 30S subunit. The polypeptide is Small ribosomal subunit protein uS8c (rps8) (Illicium oligandrum (Star anise)).